Reading from the N-terminus, the 319-residue chain is HPr kinase/phosphorylase (319 aa).

Active-site residues include histidine 146 and lysine 167. Glycine 161–serine 168 contacts ATP. Residue serine 168 coordinates Mg(2+). Aspartate 185 functions as the Proton acceptor; for phosphorylation activity. Proton donor; for dephosphorylation activity in the catalytic mechanism. The segment at leucine 209–aspartate 218 is important for the catalytic mechanism of both phosphorylation and dephosphorylation. Position 210 (glutamate 210) interacts with Mg(2+). The active site involves arginine 252. Positions glutamine 273 to arginine 278 are important for the catalytic mechanism of dephosphorylation.

This sequence belongs to the HPrK/P family. In terms of assembly, homohexamer. Requires Mg(2+) as cofactor.

The enzyme catalyses [HPr protein]-L-serine + ATP = [HPr protein]-O-phospho-L-serine + ADP + H(+). The catalysed reaction is [HPr protein]-O-phospho-L-serine + phosphate + H(+) = [HPr protein]-L-serine + diphosphate. Its function is as follows. Catalyzes the ATP- as well as the pyrophosphate-dependent phosphorylation of a specific serine residue in HPr, a phosphocarrier protein of the phosphoenolpyruvate-dependent sugar phosphotransferase system (PTS). HprK/P also catalyzes the pyrophosphate-producing, inorganic phosphate-dependent dephosphorylation (phosphorolysis) of seryl-phosphorylated HPr (P-Ser-HPr). The protein is HPr kinase/phosphorylase of Variovorax paradoxus (strain S110).